A 710-amino-acid chain; its full sequence is E3 ubiquitin-protein ligase TRIM9 (710 aa).

Residues 10-50 (CPVCGSFYREPIILPCSHNLCQACARNILVQTPESESPQSH) form an RING-type zinc finger. Position 41 is a phosphothreonine (threonine 41). Phosphoserine is present on residues serine 44, serine 46, and serine 49. 2 B box-type zinc fingers span residues 163–212 (AAAL…LVPP) and 224–266 (RKVS…VKAL). The Zn(2+) site is built by cysteine 168, cysteine 171, cysteine 193, histidine 198, cysteine 229, histidine 232, cysteine 252, and histidine 258. A coiled-coil region spans residues 273 to 340 (HKSQLSQALN…KAQLLARVNK (68 aa)). Positions 374-432 (IKENDPSGFLQISDALIRRVHLTEDQWGKGTLTPRMTTDFDLSLDNSPLLQSIHQLDFV) constitute a COS domain. Residues 440–535 (VPATPILQLE…KTLVLQTSEV (96 aa)) form the Fibronectin type-III domain. Positions 533-702 (SEVAWFAFDP…LHTGLPVPDF (170 aa)) constitute a B30.2/SPRY domain.

It belongs to the TRIM/RBCC family. As to quaternary structure, interacts with SNAP25. Post-translationally, auto-ubiquitinated. Poly-ubiquitinated in cultured cells, whereas it is monoubiquitinated in vitro. In terms of tissue distribution, brain. Highly expressed in the cerebral cortex (at protein level). Severely decreased in the affected brain areas in Parkinson disease and dementia with Lewy bodies.

It is found in the cytoplasm. The protein resides in the cell projection. Its subcellular location is the dendrite. It localises to the cytoplasmic vesicle. The protein localises to the secretory vesicle. It is found in the synaptic vesicle. The protein resides in the synapse. Its subcellular location is the cytoskeleton. The catalysed reaction is S-ubiquitinyl-[E2 ubiquitin-conjugating enzyme]-L-cysteine + [acceptor protein]-L-lysine = [E2 ubiquitin-conjugating enzyme]-L-cysteine + N(6)-ubiquitinyl-[acceptor protein]-L-lysine.. It participates in protein modification; protein ubiquitination. Its function is as follows. E3 ubiquitin-protein ligase which ubiquitinates itself in cooperation with an E2 enzyme UBE2D2/UBC4 and serves as a targeting signal for proteasomal degradation. May play a role in regulation of neuronal functions and may also participate in the formation or breakdown of abnormal inclusions in neurodegenerative disorders. May act as a regulator of synaptic vesicle exocytosis by controlling the availability of SNAP25 for the SNARE complex formation. The sequence is that of E3 ubiquitin-protein ligase TRIM9 (TRIM9) from Homo sapiens (Human).